The chain runs to 401 residues: Probable peptidoglycan glycosyltransferase FtsW (401 aa).

Topologically, residues 1–26 (MAEVLRWLRLDLGQSGGLAWERLDWR) are cytoplasmic. The chain crosses the membrane as a helical span at residues 27–47 (LALTVLALAGLGLVMVGSASV). Over 48–65 (SIAEGATGDPLHYLYRQA) the chain is Periplasmic. Residues 66 to 86 (VFLAVALMAAVACLHLSLDQF) traverse the membrane as a helical segment. The Cytoplasmic portion of the chain corresponds to 87–88 (YR). Residues 89-109 (GGPVLLVLGFFLLLVVLIPGV) traverse the membrane as a helical segment. Topologically, residues 110–118 (GREVNGATR) are periplasmic. A helical membrane pass occupies residues 119-139 (WIPLGLINLQVAEVARVCFII). Topologically, residues 140-154 (YLAGYCVRRHAELPN) are cytoplasmic. Residues 155–175 (TSSAFAVPLAVFSLAAVLLLA) traverse the membrane as a helical segment. Residues 176–180 (QPDFG) lie on the Periplasmic side of the membrane. The chain crosses the membrane as a helical span at residues 181–201 (TALVLMATALGLLFLAGASLW). Residue Arg202 is a topological domain, cytoplasmic. Residues 203 to 223 (IGVLGLLLAGAAWLLIVGSPY) form a helical membrane-spanning segment. Topologically, residues 224 to 278 (RWQRLTTFTDPWADPFNAGFQLTQSLIAIGRGEWFGVGLGASVQKLFYLPEAHTD) are periplasmic. The helical transmembrane segment at 279–299 (FLFAVLAEELGLLGVVVVVAL) threads the bilayer. The Cytoplasmic segment spans residues 300–322 (FTYLAWRGMQIGLASLRADRPFG). The chain crosses the membrane as a helical span at residues 323 to 343 (AYLAWGLTISIGLQAFINMAV). Residues 344 to 354 (TMGLLPTKGLT) are Periplasmic-facing. Residues 355–375 (LPLMSYGGSSLIMTGIALALL) form a helical membrane-spanning segment. Residues 376-401 (LRVDYEARLAAQQPRPRKRPSGRVRP) are Cytoplasmic-facing.

It belongs to the SEDS family. FtsW subfamily.

It is found in the cell inner membrane. It catalyses the reaction [GlcNAc-(1-&gt;4)-Mur2Ac(oyl-L-Ala-gamma-D-Glu-L-Lys-D-Ala-D-Ala)](n)-di-trans,octa-cis-undecaprenyl diphosphate + beta-D-GlcNAc-(1-&gt;4)-Mur2Ac(oyl-L-Ala-gamma-D-Glu-L-Lys-D-Ala-D-Ala)-di-trans,octa-cis-undecaprenyl diphosphate = [GlcNAc-(1-&gt;4)-Mur2Ac(oyl-L-Ala-gamma-D-Glu-L-Lys-D-Ala-D-Ala)](n+1)-di-trans,octa-cis-undecaprenyl diphosphate + di-trans,octa-cis-undecaprenyl diphosphate + H(+). It functions in the pathway cell wall biogenesis; peptidoglycan biosynthesis. Functionally, peptidoglycan polymerase that is essential for cell division. The protein is Probable peptidoglycan glycosyltransferase FtsW of Alkalilimnicola ehrlichii (strain ATCC BAA-1101 / DSM 17681 / MLHE-1).